A 351-amino-acid chain; its full sequence is Photosystem II D2 protein (351 aa).

A helical membrane pass occupies residues 39–59; that stretch reads TAYLAAGGWMTGTTFVTSWYT. Residue His-116 participates in chlorophyll a binding. A helical membrane pass occupies residues 123–139; it reads GFCLRQFEIARLVGIRP. Positions 128 and 141 each coordinate pheophytin a. The helical transmembrane segment at 151-164 threads the bilayer; the sequence is VFVSVFLLYPLGQA. Position 196 (His-196) interacts with chlorophyll a. Residues 206–226 form a helical membrane-spanning segment; that stretch reads GALLCAIHGATVENTLFEDGD. A plastoquinone-binding residues include His-213 and Phe-260. His-213 lines the Fe cation pocket. Fe cation is bound at residue His-267. The chain crosses the membrane as a helical span at residues 277-293; sequence GLWTSAIGIVGLALNLR.

The protein belongs to the reaction center PufL/M/PsbA/D family. PSII is composed of 1 copy each of membrane proteins PsbA, PsbB, PsbC, PsbD, PsbE, PsbF, PsbH, PsbI, PsbJ, PsbK, PsbL, PsbM, PsbT, PsbX, PsbY, PsbZ, Psb30/Ycf12, at least 3 peripheral proteins of the oxygen-evolving complex and a large number of cofactors. It forms dimeric complexes. The cofactor is The D1/D2 heterodimer binds P680, chlorophylls that are the primary electron donor of PSII, and subsequent electron acceptors. It shares a non-heme iron and each subunit binds pheophytin, quinone, additional chlorophylls, carotenoids and lipids. There is also a Cl(-1) ion associated with D1 and D2, which is required for oxygen evolution. The PSII complex binds additional chlorophylls, carotenoids and specific lipids..

It is found in the plastid. The protein localises to the chloroplast thylakoid membrane. The catalysed reaction is 2 a plastoquinone + 4 hnu + 2 H2O = 2 a plastoquinol + O2. Functionally, photosystem II (PSII) is a light-driven water:plastoquinone oxidoreductase that uses light energy to abstract electrons from H(2)O, generating O(2) and a proton gradient subsequently used for ATP formation. It consists of a core antenna complex that captures photons, and an electron transfer chain that converts photonic excitation into a charge separation. The D1/D2 (PsbA/PsbD) reaction center heterodimer binds P680, the primary electron donor of PSII as well as several subsequent electron acceptors. D2 is needed for assembly of a stable PSII complex. This chain is Photosystem II D2 protein, found in Trieres chinensis (Marine centric diatom).